A 333-amino-acid chain; its full sequence is 4-hydroxyproline 2-epimerase (333 aa).

C90 (proton acceptor) is an active-site residue. Residues 91–92, H223, and D249 each bind substrate; that span reads GH. The active-site Proton donor is the C253. 254–255 provides a ligand contact to substrate; it reads GT.

The protein belongs to the proline racemase family.

It catalyses the reaction trans-4-hydroxy-L-proline = cis-4-hydroxy-D-proline. In terms of biological role, catalyzes the epimerization of trans-4-hydroxy-L-proline (t4LHyp) to cis-4-hydroxy-D-proline (c4DHyp). Is likely involved in a degradation pathway that converts t4LHyp to alpha-ketoglutarate. Displays no proline racemase activity. In Shewanella loihica (strain ATCC BAA-1088 / PV-4), this protein is 4-hydroxyproline 2-epimerase.